The chain runs to 475 residues: Cytochrome P450 monooxygenase sthD (475 aa).

An N-terminal signal peptide occupies residues 1–17; the sequence is MAAYFLLGLYGSTLVYR. The chain crosses the membrane as a helical span at residues 276 to 296; it reads FIIIAGSDTVAATLTFAFFYL. The N-linked (GlcNAc...) asparagine glycan is linked to Asn-336. A heme-binding site is contributed by Cys-418.

This sequence belongs to the cytochrome P450 family. It depends on heme as a cofactor.

The protein resides in the membrane. It carries out the reaction betaenone A + NADPH + O2 + H(+) = stemphyloxin II + NADP(+) + H2O. The catalysed reaction is betaenone C + NADPH + O2 + H(+) = stemphyloxin I + NADP(+) + H2O. Its pathway is mycotoxin biosynthesis. Its function is as follows. Cytochrome P450 monooxygenase; part of the gene cluster that mediates the biosynthesis of the phytotoxin stemphyloxin II. The first step of the pathway is the synthesis of dehydroprobetaenone I by the polyketide synthase sthA and the enoyl reductase sthE via condensation of one acetyl-CoA starter unit with 7 malonyl-CoA units and 5 methylations. The C-terminal reductase (R) domain of sthA catalyzes the reductive release of the polyketide chain. Because sthA lacks a designated enoylreductase (ER) domain, the required activity is provided the enoyl reductase sthE. The short-chain dehydrogenase/reductase sthC then catalyzes reduction of dehydroprobetaenone I to probetaenone I. The cytochrome P450 monooxygenase sthF catalyzes successive epoxidation, oxidation (resulting from epoxide opening) and hydroxylation to install a tertiary alcohol in the decaline ring to yield betaenone C from dehydroprobetaenone I and betaenone B from probetaenone I. The FAD-linked oxidoreductase sthB is responsible for the conversion of betaenone C to betaenone A via an intramolecular aldol reaction between C-1 and C-17 to form the bridged tricyclic system in betaenone A. Finally, the cytochrome P450 monooxygenase sthD catalyzes the hydroxylation of C-15 to afford the final metabolite stemphyloxin II. The chain is Cytochrome P450 monooxygenase sthD from Phaeosphaeria nodorum (strain SN15 / ATCC MYA-4574 / FGSC 10173) (Glume blotch fungus).